Here is a 415-residue protein sequence, read N- to C-terminus: 3-isopropylmalate dehydratase large subunit (415 aa).

Cys-297, Cys-355, and Cys-358 together coordinate [4Fe-4S] cluster.

The protein belongs to the aconitase/IPM isomerase family. LeuC type 2 subfamily. As to quaternary structure, heterodimer of LeuC and LeuD. [4Fe-4S] cluster is required as a cofactor.

The catalysed reaction is (2R,3S)-3-isopropylmalate = (2S)-2-isopropylmalate. It functions in the pathway amino-acid biosynthesis; L-leucine biosynthesis; L-leucine from 3-methyl-2-oxobutanoate: step 2/4. In terms of biological role, catalyzes the isomerization between 2-isopropylmalate and 3-isopropylmalate, via the formation of 2-isopropylmaleate. This is 3-isopropylmalate dehydratase large subunit from Metallosphaera sedula (strain ATCC 51363 / DSM 5348 / JCM 9185 / NBRC 15509 / TH2).